Consider the following 163-residue polypeptide: Probable chemoreceptor glutamine deamidase CheD (163 aa).

Belongs to the CheD family.

The catalysed reaction is L-glutaminyl-[protein] + H2O = L-glutamyl-[protein] + NH4(+). In terms of biological role, probably deamidates glutamine residues to glutamate on methyl-accepting chemotaxis receptors (MCPs), playing an important role in chemotaxis. This Borrelia turicatae (strain 91E135) protein is Probable chemoreceptor glutamine deamidase CheD.